A 206-amino-acid chain; its full sequence is MKPQFITLDGIDGAGKSTNLAVIKAWFERRGLPVLFTREPGGTPVGEALREILLNPETKAGLRAETLMMFAARMQHIEDVILPALSDGIHVVSDRFTDATFAYQGGGRGMPSEDIEILEHWVQGGLRPDLTLLLDVPLEVSMARIGQTREKDRFEQEQADFFMRVRSVYLNRAAACPERYAVIDSNLGLDEVRNSIEKVLDRHFGC.

ATP is bound at residue 10-17 (GIDGAGKS).

Belongs to the thymidylate kinase family.

The catalysed reaction is dTMP + ATP = dTDP + ADP. In terms of biological role, phosphorylation of dTMP to form dTDP in both de novo and salvage pathways of dTTP synthesis. The protein is Thymidylate kinase (tmk) of Neisseria meningitidis serogroup A / serotype 4A (strain DSM 15465 / Z2491).